Reading from the N-terminus, the 265-residue chain is MVKWLYQLFIELTNHAWTSKCLASFTRSKWSRLFISSYAKVYKINKEEMEKKLHEYETLQQLFVRTLKKGLRPIDTHPDSVVSPVDAVIEDVGIITDQKEIIVKGKTYSIREMLGDDQIAEKYLHGTFIILYLSPSHYHRIHSPICGEVVKQWELGGKSYPVNRLGLKYGKAPLSKNYRRITELYTNGMYTAIVKVGAMFVNSIELTHEHDHVKKGEEIGYFSFGSTVVLLFEKDVFTLDEQIVPPFEVKMGQRIGFLAQKKKSQ.

Residues Asp-86, His-142, and Ser-226 each act as charge relay system; for autoendoproteolytic cleavage activity in the active site. The Schiff-base intermediate with substrate; via pyruvic acid; for decarboxylase activity role is filled by Ser-226. Position 226 is a pyruvic acid (Ser); by autocatalysis (Ser-226).

It belongs to the phosphatidylserine decarboxylase family. PSD-B subfamily. Prokaryotic type I sub-subfamily. As to quaternary structure, heterodimer of a large membrane-associated beta subunit and a small pyruvoyl-containing alpha subunit. Requires pyruvate as cofactor. In terms of processing, is synthesized initially as an inactive proenzyme. Formation of the active enzyme involves a self-maturation process in which the active site pyruvoyl group is generated from an internal serine residue via an autocatalytic post-translational modification. Two non-identical subunits are generated from the proenzyme in this reaction, and the pyruvate is formed at the N-terminus of the alpha chain, which is derived from the carboxyl end of the proenzyme. The autoendoproteolytic cleavage occurs by a canonical serine protease mechanism, in which the side chain hydroxyl group of the serine supplies its oxygen atom to form the C-terminus of the beta chain, while the remainder of the serine residue undergoes an oxidative deamination to produce ammonia and the pyruvoyl prosthetic group on the alpha chain. During this reaction, the Ser that is part of the protease active site of the proenzyme becomes the pyruvoyl prosthetic group, which constitutes an essential element of the active site of the mature decarboxylase.

It localises to the cell membrane. The catalysed reaction is a 1,2-diacyl-sn-glycero-3-phospho-L-serine + H(+) = a 1,2-diacyl-sn-glycero-3-phosphoethanolamine + CO2. It participates in phospholipid metabolism; phosphatidylethanolamine biosynthesis; phosphatidylethanolamine from CDP-diacylglycerol: step 2/2. Its function is as follows. Catalyzes the formation of phosphatidylethanolamine (PtdEtn) from phosphatidylserine (PtdSer). The chain is Phosphatidylserine decarboxylase proenzyme from Anoxybacillus flavithermus (strain DSM 21510 / WK1).